Here is a 422-residue protein sequence, read N- to C-terminus: Osteomodulin (422 aa).

The N-terminal stretch at 1–20 is a signal peptide; it reads MGFSSLVCVLFFFLGVKVYC. Residues 21–27 constitute a propeptide that is removed on maturation; the sequence is QYESYQW. A sulfotyrosine mark is found at Tyr-22, Tyr-25, Tyr-31, Tyr-39, Tyr-51, and Tyr-77. Residues 53–91 form the LRRNT domain; sequence APFHQHTLGCASECFCPPNFPSSMYCDNRKLKTIPNIPA. LRR repeat units lie at residues 92 to 113, 116 to 129, 142 to 164, 165 to 184, 187 to 207, 213 to 233, 234 to 255, 258 to 280, 281 to 294, 301 to 322, and 331 to 353; these read HIQQ…SFIN, HLKE…KIKS, NLLQ…PKSL, ERIF…AVNG, NLTM…QEKV, KLMQ…GLPS, SLMY…YFNK, KLHA…FNLS, NLIE…KLKQ, NLEH…VMCP, and HLTH…IFLC. N-linked (GlcNAc...) asparagine glycosylation is found at Asn-113 and Asn-121. N-linked (GlcNAc...) asparagine glycosylation is present at Asn-187. N-linked (GlcNAc...) asparagine glycans are attached at residues Asn-242 and Asn-278. Asn-316 is a glycosylation site (N-linked (GlcNAc...) asparagine). Residues Cys-321 and Cys-353 are joined by a disulfide bond. Residues 385 to 422 are disordered; sequence DDGDSEDHDDHHEGPEEEGTEENIDAHYYGSQEWQETI. Sulfotyrosine occurs at positions 412 and 413.

This sequence belongs to the small leucine-rich proteoglycan (SLRP) family. SLRP class II subfamily. As to quaternary structure, binds the alpha(V)beta(3)-integrin. The N-terminus is blocked. Post-translationally, glycosylated; contains keratan sulfate. In terms of processing, sulfated on tyrosine residue(s). Bone specific (at protein level).

Its subcellular location is the secreted. It localises to the extracellular space. It is found in the extracellular matrix. May be implicated in biomineralization processes. Has a function in binding of osteoblasts via the alpha(V)beta(3)-integrin. The protein is Osteomodulin (OMD) of Bos taurus (Bovine).